Consider the following 466-residue polypeptide: Eukaryotic translation initiation factor 3 subunit M (466 aa).

The interval 40–62 (EISPLLEPLRQQEQSDAEPDRKQ) is disordered. A PCI domain is found at 211–378 (AQTHILQALQ…SEFLVHRATY (168 aa)). Residues 424–466 (AAEEAAQGKSNDKGNKSGDRRQRHGNNQQSQQQQQPQEVAAAE) form a disordered region. Basic and acidic residues predominate over residues 433–443 (SNDKGNKSGDR). The segment covering 451-460 (QQSQQQQQPQ) has biased composition (low complexity).

This sequence belongs to the eIF-3 subunit M family. Component of the eukaryotic translation initiation factor 3 (eIF-3) complex.

It is found in the cytoplasm. In terms of biological role, component of the eukaryotic translation initiation factor 3 (eIF-3) complex, which is involved in protein synthesis of a specialized repertoire of mRNAs and, together with other initiation factors, stimulates binding of mRNA and methionyl-tRNAi to the 40S ribosome. The eIF-3 complex specifically targets and initiates translation of a subset of mRNAs involved in cell proliferation. In Aspergillus oryzae (strain ATCC 42149 / RIB 40) (Yellow koji mold), this protein is Eukaryotic translation initiation factor 3 subunit M.